The chain runs to 873 residues: DNA helicase/primase complex-associated protein (873 aa).

The interval 394 to 422 (PPLPRDDGDGENNVVEVSSSTGGAHPPSD) is disordered.

This sequence belongs to the herpesviridae HEPA family. Associates with the primase and the helicase to form the helicase-primase complex. Interacts with the origin-binding protein. Interacts with the polymerase catalytic subunit.

Its subcellular location is the host nucleus. Component of the helicase/primase complex. Unwinds the DNA at the replication forks and generates single-stranded DNA for both leading and lagging strand synthesis. The primase synthesizes short RNA primers on the lagging strand that the polymerase presumably elongates using dNTPs. The primase-associated factor has no known catalytic activity in the complex and may serve to facilitate the formation of the replisome by directly interacting with the origin-binding protein and the polymerase. This is DNA helicase/primase complex-associated protein (UL102) from Human cytomegalovirus (strain Merlin) (HHV-5).